Here is a 495-residue protein sequence, read N- to C-terminus: Probable endopolygalacturonase D (495 aa).

A signal peptide spans 1-16 (MKRSALLASFLPLALG). C154 and C169 are disulfide-bonded. 3 PbH1 repeats span residues 261 to 283 (MYNS…EIEN), 284 to 322 (TEYL…DIKQ), and 323 to 344 (SDFL…AVTS). The N-linked (GlcNAc...) asparagine glycan is linked to N295. D337 functions as the Proton donor in the catalytic mechanism. C339 and C355 are oxidised to a cystine. Residue H359 is part of the active site. Residue N371 is glycosylated (N-linked (GlcNAc...) asparagine). 2 PbH1 repeats span residues 374–395 (VDGV…RIKS) and 403–425 (VYNV…DIQQ). N-linked (GlcNAc...) asparagine glycosylation is found at N410 and N444. 2 disulfide bridges follow: C464–C469 and C487–C494. Residues 469–492 (CSNFVFTDVDITGGSDDSCNYPSS) form a PbH1 6 repeat.

Belongs to the glycosyl hydrolase 28 family.

The protein localises to the secreted. The enzyme catalyses (1,4-alpha-D-galacturonosyl)n+m + H2O = (1,4-alpha-D-galacturonosyl)n + (1,4-alpha-D-galacturonosyl)m.. Involved in maceration and soft-rotting of plant tissue. Hydrolyzes the 1,4-alpha glycosidic bonds of de-esterified pectate in the smooth region of the plant cell wall. The sequence is that of Probable endopolygalacturonase D (pgaD) from Aspergillus niger (strain ATCC MYA-4892 / CBS 513.88 / FGSC A1513).